The chain runs to 1184 residues: MSTLGNSTVKPTNAEFPGLHAMERYKPATSESLYVKGHYGPHPHKEHPAAYVAAKTGFNATSRRQSVREHHSSHEGSAQLNPDRILYMSAGAVTAAVPNKEHTDNVTTSQTIRYETSSQPSQEVYHPHAGKAAQSAHVMNSTESRPSSAHVSSSYTQKPFAFPLGPVFATSSQAAASETALPSGYEPDEARFIGASQLAKLSASHAHQTPAQTVDDDVPLPTRMAATELVGHIPLRAANYANEYSQDVPASTHRAASELVHGVPMRASGINDPKHDLDAATRHNINSVAAASYVAARSRVIEEEEEPPNEVKERMDYEADAQRRIRKMNVFGSAGAALRERTQQDLMANEQEHSGEFAGFSRNLTNTAAAPTTYEYKRPTSSYTAKDATSKVYRSNTYKPKSSVNGSVYRSKSVKSTTSHNKVPERNSVPAYNEKLMHSSAANAAILSHKNYSPPVQPTRDDEVSQEDARVKEIVRGMKLPLTSSSLSAAAYRPMEKQDPATVERHHIQAEATQRVRDMKLDLTKLESKTNDEIRSYRPRNVVIKPYAAATPPKNIPSTYRAPQAPSVLSPVVTASEGDFELDGITPERQQTMTRSTYQESSQRPFHEDPFRTHPGLLQAVARNHRNSLANIDERIMRQNQAATANTNTVSETDIEALERRLSKAYRMEAQEEAYAINIGGGRVISPEELEEIARRNVDPMVSELSERAAQERERKEQAKEAKRLKKLAKEEKRLKKKEEKARKAEEKRLQKERAKYAKQMSRESAHADQAIANTGPVAPPYFEHETEPSHYEEEEEEEPEERREESSHFSESSGNNEFEETEQEYTHGYGNDVLVQRTDVVNNFGESSHAHDNAVNEKRDLGRNGFGDVDEQDATEVYRHSIERIVPGDYLHDEKTRDTLTRESPAFRSEEAVVEVADEDHPHASEAERAHSYSNRKQASSESSPESQSTHYNDYEGTEDNIVRQTTTVDEDGHQEQTTSTTKVAHPIPVSNGLSSPPRERLDDNAKEILSRSSPKSPVAWFKRKFKNRKDKAAVKRMLEEDSSKQLSSGRDVVAPTSVNHDVSHVGESTKPAVNNSTKPVAVTSKNGHSRNGSHAAHSNNVIGTQPHVNVSAVPNTGNLKDALEGSAVSKTDDVDNVVSGHSNVNGVSKSRPNIVERSEDYVISHLPEQSRAPIGAAFQEDL.

2 disordered regions span residues 115–152 (ETSS…AHVS) and 397–426 (TYKP…VPER). 2 stretches are compositionally biased toward polar residues: residues 137 to 152 (HVMN…AHVS) and 397 to 421 (TYKP…TSHN). Ser686 is subject to Phosphoserine. Basic and acidic residues-rich tracts occupy residues 705 to 767 (LSER…ESAH), 783 to 792 (FEHETEPSHY), 849 to 863 (SHAH…RDLG), and 891 to 902 (YLHDEKTRDTLT). Disordered regions lie at residues 705 to 870 (LSER…FGDV) and 890 to 1017 (DYLH…SSPK). A Phosphoserine modification is found at Ser905. Residues 920-932 (EDHPHASEAERAH) show a composition bias toward basic and acidic residues. The segment covering 941 to 950 (SSESSPESQS) has biased composition (low complexity). Residues 999-1011 (PRERLDDNAKEIL) are compositionally biased toward basic and acidic residues. A Phosphoserine modification is found at Ser1018. 2 disordered regions span residues 1029–1107 (NRKD…IGTQ) and 1135–1154 (DVDN…KSRP). Basic and acidic residues predominate over residues 1032-1045 (DKAAVKRMLEEDSS). Residues 1073 to 1107 (PAVNNSTKPVAVTSKNGHSRNGSHAAHSNNVIGTQ) show a composition bias toward polar residues. Over residues 1138-1150 (NVVSGHSNVNGVS) the composition is skewed to low complexity.

The protein resides in the cytoplasm. This is an uncharacterized protein from Schizosaccharomyces pombe (strain 972 / ATCC 24843) (Fission yeast).